The primary structure comprises 318 residues: NADH-ubiquinone oxidoreductase chain 1 (318 aa).

8 helical membrane-spanning segments follow: residues 2-22 (LLTN…FLTL), 69-89 (LMFI…WAPL), 102-122 (ILFI…SGWA), 147-167 (AIIL…TLTI), 172-192 (MWLI…TLAE), 231-251 (IILM…NPLF), 253-273 (ELHT…FLWI), and 294-314 (LPLT…LAGI).

It belongs to the complex I subunit 1 family.

The protein resides in the mitochondrion inner membrane. The catalysed reaction is a ubiquinone + NADH + 5 H(+)(in) = a ubiquinol + NAD(+) + 4 H(+)(out). Functionally, core subunit of the mitochondrial membrane respiratory chain NADH dehydrogenase (Complex I) that is believed to belong to the minimal assembly required for catalysis. Complex I functions in the transfer of electrons from NADH to the respiratory chain. The immediate electron acceptor for the enzyme is believed to be ubiquinone. The protein is NADH-ubiquinone oxidoreductase chain 1 (MT-ND1) of Bradypus variegatus (Brown-throated three-fingered sloth).